The primary structure comprises 487 residues: Dihydrofolate synthase/folylpolyglutamate synthase (487 aa).

7,8-dihydropteroate is bound at residue 44 to 46 (DPS). 74–77 (GKTS) lines the ATP pocket. Mg(2+)-binding residues include Thr-76 and Ser-98. 150–153 (SKFE) contributes to the 7,8-dihydropteroate binding site. Glu-174 lines the Mg(2+) pocket. 181–183 (WDA) provides a ligand contact to 7,8-dihydropteroate. Residues His-201 and Asp-203 each coordinate Mg(2+). ATP is bound by residues Asn-301, Arg-338, and 351 to 354 (DAAH). Residue Asp-384 coordinates Mg(2+).

This sequence belongs to the folylpolyglutamate synthase family. In terms of assembly, monomer. Mg(2+) serves as cofactor.

It catalyses the reaction 7,8-dihydropteroate + L-glutamate + ATP = 7,8-dihydrofolate + ADP + phosphate + H(+). It carries out the reaction (6S)-5,6,7,8-tetrahydrofolyl-(gamma-L-Glu)(n) + L-glutamate + ATP = (6S)-5,6,7,8-tetrahydrofolyl-(gamma-L-Glu)(n+1) + ADP + phosphate + H(+). The protein operates within cofactor biosynthesis; tetrahydrofolate biosynthesis; 7,8-dihydrofolate from 2-amino-4-hydroxy-6-hydroxymethyl-7,8-dihydropteridine diphosphate and 4-aminobenzoate: step 2/2. Its pathway is cofactor biosynthesis; tetrahydrofolylpolyglutamate biosynthesis. Catalyzes the addition of a glutamate residue to dihydropteroate (7,8-dihydropteroate or H2Pte) to form dihydrofolate (7,8-dihydrofolate monoglutamate or H2Pte-Glu). Also catalyzes successive additions of L-glutamate to tetrahydrofolate, leading to folylpolyglutamate derivatives. In terms of biological role, is involved in the bioactivation of the antituberculous drug para-aminosalicylic acid (PAS). Is able to use hydroxy-dihydropteroate (H2PtePAS) as substrate, which is the product formed by the action of DHPS (FolP1) on PAS, leading to hydroxy-dihydrofolate (H2PtePAS-Glu). This compound inhibits dihydrofolate reductase DHFR (DfrA), the next enzyme in the folate pathway, and thus disrupts the folate-dependent metabolic pathways. The chain is Dihydrofolate synthase/folylpolyglutamate synthase from Mycobacterium tuberculosis (strain ATCC 25618 / H37Rv).